The following is a 154-amino-acid chain: SsrA-binding protein (154 aa).

The segment at 130 to 154 (KLHDKRETERRRQDQRDIQRAIKRA) is disordered. Over residues 133–154 (DKRETERRRQDQRDIQRAIKRA) the composition is skewed to basic and acidic residues.

It belongs to the SmpB family.

Its subcellular location is the cytoplasm. In terms of biological role, required for rescue of stalled ribosomes mediated by trans-translation. Binds to transfer-messenger RNA (tmRNA), required for stable association of tmRNA with ribosomes. tmRNA and SmpB together mimic tRNA shape, replacing the anticodon stem-loop with SmpB. tmRNA is encoded by the ssrA gene; the 2 termini fold to resemble tRNA(Ala) and it encodes a 'tag peptide', a short internal open reading frame. During trans-translation Ala-aminoacylated tmRNA acts like a tRNA, entering the A-site of stalled ribosomes, displacing the stalled mRNA. The ribosome then switches to translate the ORF on the tmRNA; the nascent peptide is terminated with the 'tag peptide' encoded by the tmRNA and targeted for degradation. The ribosome is freed to recommence translation, which seems to be the essential function of trans-translation. The polypeptide is SsrA-binding protein (Synechococcus elongatus (strain ATCC 33912 / PCC 7942 / FACHB-805) (Anacystis nidulans R2)).